Here is a 93-residue protein sequence, read N- to C-terminus: MARSLKKGPFADESLLKKVDAMNASGDKSVIKTWSRRSTIFPSFVGHTIAVHDGRKHVPVYVTEDMVGHKLGEFVATRTYRGHGKDEKKSGVR.

The protein belongs to the universal ribosomal protein uS19 family.

Its function is as follows. Protein S19 forms a complex with S13 that binds strongly to the 16S ribosomal RNA. This chain is Small ribosomal subunit protein uS19, found in Agathobacter rectalis (strain ATCC 33656 / DSM 3377 / JCM 17463 / KCTC 5835 / VPI 0990) (Eubacterium rectale).